A 975-amino-acid polypeptide reads, in one-letter code: MASNNVAQFAAELKMPAGVLLEQLQAAGVQKASEDDALSETDKARLLDHLRKSHGATDGDKRKITLTRRHTSEIKQADATGKARTIQVEVRKKRTFVKRDDVSETGADQAHAQTDEQAEAELKRREEEARREAELLEKQAQELRERQERLEREEAERRAREEAAEAERRRAEEEAAAKRAAAAQAEAAQQAAAAREQAQRAQSEPAEQSAQDEARAAAERAAQREAAKKAEDAAREAADKARAEQEEIRKRREAAEAEARAIREMMNTPRRAQVKAVEPPKPAEPPAAKTAEAKGTLHKPAKPAGEAAAARPAAKKPASGAPAPAAAPAGDRTKKPGTGKSGWQDDAAKRRGIKTRGDSSGGVDRGWRGGPKGRGKHQDSASSFQAPTEPIVREVHVPETISVADLAHKMSIKASEVIKVMMKMGQMVTINQVLDQETAMIVVEELGHRALAAKLDDPEALLVEGEIGSDAEQLPRPPVVTVMGHVDHGKTSLLDYIRRAKVAAGEAGGITQHIGAYHVETPRGVVTFLDTPGHEAFTAMRARGAKATDIVILVVAADDGVMPQTKEAISHAKAGGVPIVVAINKIDKPEANPDRVKQELVAEGVVPEEYGGDSPFVPVSAKTGAGIDDLLENVLLQAEVLELKAPVESPAKGIVIEAKLDKGKGPVATVLVQSGTLSRGDVVLAGTAYGRVRAMLDENGKPTKEAGPSIPVEIQGLSEVPGAGEEVIVLPDERKAREIALFRQGKFRDVKLAKQQAAKLESMLEQMGEGEVQNLPLIIKADVQGSQEALVQSLLKLSTDEVRVQIVHSAVGGISESDVNLATASKAVIIGFNTRADAQARKLAEANGIDIRYYNIIYDAVDEVKAAMSGMLAPEKREVVTGMVEVRQVFKVPKVGTVAGCMVTDGVVKRSSSVRVLRNNVVIFTGELDSLKRFKDDVKEVKQGFECGMSLKNFNDIVEGDQFEVFEVTEVARTL.

Composition is skewed to basic and acidic residues over residues 48–63 (DHLR…DKRK) and 120–177 (AELK…EAAA). Disordered regions lie at residues 48–85 (DHLR…KART) and 98–390 (KRDD…PTEP). The segment covering 178 to 211 (KRAAAAQAEAAQQAAAAREQAQRAQSEPAEQSAQ) has biased composition (low complexity). A compositionally biased stretch (basic and acidic residues) spans 212-263 (DEARAAAERAAQREAAKKAEDAAREAADKARAEQEEIRKRREAAEAEARAIR). Residues 302 to 330 (KPAGEAAAARPAAKKPASGAPAPAAAPAG) show a composition bias toward low complexity. Residues 359–372 (SSGGVDRGWRGGPK) show a composition bias toward gly residues. One can recognise a tr-type G domain in the interval 475–644 (PRPPVVTVMG…LLQAEVLELK (170 aa)). The G1 stretch occupies residues 484-491 (GHVDHGKT). 484-491 (GHVDHGKT) contacts GTP. Positions 509 to 513 (GITQH) are G2. Positions 530-533 (DTPG) are G3. GTP is bound by residues 530 to 534 (DTPGH) and 584 to 587 (NKID). The interval 584–587 (NKID) is G4. The tract at residues 620 to 622 (SAK) is G5.

It belongs to the TRAFAC class translation factor GTPase superfamily. Classic translation factor GTPase family. IF-2 subfamily.

It localises to the cytoplasm. Functionally, one of the essential components for the initiation of protein synthesis. Protects formylmethionyl-tRNA from spontaneous hydrolysis and promotes its binding to the 30S ribosomal subunits. Also involved in the hydrolysis of GTP during the formation of the 70S ribosomal complex. This chain is Translation initiation factor IF-2, found in Burkholderia pseudomallei (strain 1106a).